A 609-amino-acid chain; its full sequence is Kelch-like protein 20 (609 aa).

The region spanning 68–135 is the BTB domain; it reads CDVVLVVGAK…AYTSQITVEE (68 aa). In terms of domain architecture, BACK spans 170–272; it reads CLGIRAFADT…SPKFLVGTVG (103 aa). Kelch repeat units lie at residues 319–365, 367–413, 414–460, 462–507, 509–554, and 556–601; these read VLFA…VLDD, LYAV…VLGG, FLYA…VLGG, LYAV…VYQD, IYAV…VVNG, and LMAV…VIKM.

Component of the BCR(KLHL20) E3 ubiquitin ligase complex, at least composed of CUL3, KLHL20 and RBX1. Interacts with PDZ-RhoGEF/ARHGEF11, DAPK1, PML and CORO7. Interacts with F-actin. Interacts with IFN-gamma (IFNG). Interacts (via kelch repeats) with IVNS1ABP (via kelch repeats); this interaction blocks the assembly of CUL3-KLHL20 complex.

The protein resides in the cytoplasm. It is found in the perinuclear region. Its subcellular location is the nucleus. The protein localises to the golgi apparatus. It localises to the trans-Golgi network. The protein resides in the cell projection. It is found in the axon. Its subcellular location is the dendrite. Its pathway is protein modification; protein ubiquitination. Substrate-specific adapter of a BCR (BTB-CUL3-RBX1) E3 ubiquitin-protein ligase complex involved in interferon response and anterograde Golgi to endosome transport. The BCR(KLHL20) E3 ubiquitin ligase complex mediates the ubiquitination of DAPK1, leading to its degradation by the proteasome, thereby acting as a negative regulator of apoptosis. The BCR(KLHL20) E3 ubiquitin ligase complex also specifically mediates 'Lys-33'-linked ubiquitination. Involved in anterograde Golgi to endosome transport by mediating 'Lys-33'-linked ubiquitination of CORO7, promoting interaction between CORO7 and EPS15, thereby facilitating actin polymerization and post-Golgi trafficking. Also acts as a regulator of endothelial migration during angiogenesis by controlling the activation of Rho GTPases. The BCR(KLHL20) E3 ubiquitin ligase complex acts as a regulator of neurite outgrowth by mediating ubiquitination and degradation of PDZ-RhoGEF/ARHGEF11. The protein is Kelch-like protein 20 (KLHL20) of Pongo abelii (Sumatran orangutan).